A 516-amino-acid chain; its full sequence is Levanbiose-producing levanase (516 aa).

Over 1–5 (MNYIK) the chain is Cytoplasmic. Residues 6-26 (AGKWLTVFLTFLGILLFIDLF) form a helical membrane-spanning segment. The Extracellular portion of the chain corresponds to 27–516 (PKEEHDQKTK…TVKHFDSIHE (490 aa)). Residues 55–58 (WKND), 116–117 (WT), 181–182 (RD), glutamate 230, and tryptophan 318 each bind substrate. Aspartate 58 is an active-site residue.

Belongs to the glycosyl hydrolase 32 family.

It is found in the cell membrane. The catalysed reaction is Hydrolysis of (2-&gt;6)-beta-D-fructofuranan, to remove successive disaccharide residues as levanbiose, i.e. 6-(beta-D-fructofuranosyl)-D-fructose, from the end of the chain.. Functionally, catalyzes the degradation of levan mainly into levanbiose (difructose). Is not active on sucrose. The polypeptide is Levanbiose-producing levanase (levB) (Bacillus subtilis (strain 168)).